The sequence spans 319 residues: Ribonucleoside-diphosphate reductase small chain (319 aa).

Residues D70, E101, and H104 each contribute to the Fe cation site. The active site involves Y108. The Fe cation site is built by E163, E197, and H200. Residues 313 to 319 (FSLDVDF) are interaction with R1.

This sequence belongs to the ribonucleoside diphosphate reductase small chain family. In terms of assembly, interacts with RNR1/OPG080 subunit. Can interact with host RNR1 supunit. Requires Fe cation as cofactor.

The enzyme catalyses a 2'-deoxyribonucleoside 5'-diphosphate + [thioredoxin]-disulfide + H2O = a ribonucleoside 5'-diphosphate + [thioredoxin]-dithiol. Ribonucleoside-diphosphate reductase holoenzyme provides the precursors necessary for viral DNA synthesis. Allows virus growth in non-dividing cells. Catalyzes the biosynthesis of deoxyribonucleotides from the corresponding ribonucleotides. This Bos taurus (Bovine) protein is Ribonucleoside-diphosphate reductase small chain (OPG048).